Consider the following 431-residue polypeptide: Serine--tRNA ligase (431 aa).

236–238 (TAE) provides a ligand contact to L-serine. 267-269 (RSE) lines the ATP pocket. Residue glutamate 290 coordinates L-serine. Residue 354–357 (EISS) participates in ATP binding. Serine 389 is a binding site for L-serine.

This sequence belongs to the class-II aminoacyl-tRNA synthetase family. Type-1 seryl-tRNA synthetase subfamily. Homodimer. The tRNA molecule binds across the dimer.

The protein localises to the cytoplasm. The catalysed reaction is tRNA(Ser) + L-serine + ATP = L-seryl-tRNA(Ser) + AMP + diphosphate + H(+). It catalyses the reaction tRNA(Sec) + L-serine + ATP = L-seryl-tRNA(Sec) + AMP + diphosphate + H(+). It functions in the pathway aminoacyl-tRNA biosynthesis; selenocysteinyl-tRNA(Sec) biosynthesis; L-seryl-tRNA(Sec) from L-serine and tRNA(Sec): step 1/1. In terms of biological role, catalyzes the attachment of serine to tRNA(Ser). Is also able to aminoacylate tRNA(Sec) with serine, to form the misacylated tRNA L-seryl-tRNA(Sec), which will be further converted into selenocysteinyl-tRNA(Sec). This is Serine--tRNA ligase from Herminiimonas arsenicoxydans.